The sequence spans 494 residues: Glutamate--tRNA ligase (494 aa).

Positions 10–20 match the 'HIGH' region motif; it reads PSPTGDPHVGT. Zn(2+)-binding residues include cysteine 107, cysteine 109, cysteine 134, and histidine 136. Residues 251 to 255 carry the 'KMSKS' region motif; the sequence is KLSKR. Lysine 254 is a binding site for ATP.

This sequence belongs to the class-I aminoacyl-tRNA synthetase family. Glutamate--tRNA ligase type 1 subfamily. Monomer. It depends on Zn(2+) as a cofactor.

The protein resides in the cytoplasm. It carries out the reaction tRNA(Glu) + L-glutamate + ATP = L-glutamyl-tRNA(Glu) + AMP + diphosphate. Functionally, catalyzes the attachment of glutamate to tRNA(Glu) in a two-step reaction: glutamate is first activated by ATP to form Glu-AMP and then transferred to the acceptor end of tRNA(Glu). The chain is Glutamate--tRNA ligase from Pseudomonas aeruginosa (strain UCBPP-PA14).